Reading from the N-terminus, the 570-residue chain is Urease subunit alpha (570 aa).

One can recognise a Urease domain in the interval 131–570 (GGMDSHIHFI…LPMAQRYFLF (440 aa)). H136, H138, and K219 together coordinate Ni(2+). K219 carries the post-translational modification N6-carboxylysine. H221 is a binding site for substrate. Ni(2+) contacts are provided by H248 and H274. H322 serves as the catalytic Proton donor. D362 is a Ni(2+) binding site.

The protein belongs to the metallo-dependent hydrolases superfamily. Urease alpha subunit family. As to quaternary structure, heterotrimer of UreA (gamma), UreB (beta) and UreC (alpha) subunits. Three heterotrimers associate to form the active enzyme. It depends on Ni cation as a cofactor. In terms of processing, carboxylation allows a single lysine to coordinate two nickel ions.

It is found in the cytoplasm. The catalysed reaction is urea + 2 H2O + H(+) = hydrogencarbonate + 2 NH4(+). The protein operates within nitrogen metabolism; urea degradation; CO(2) and NH(3) from urea (urease route): step 1/1. This Rhizobium johnstonii (strain DSM 114642 / LMG 32736 / 3841) (Rhizobium leguminosarum bv. viciae) protein is Urease subunit alpha.